A 428-amino-acid polypeptide reads, in one-letter code: Glutamate-1-semialdehyde 2,1-aminomutase 2 (428 aa).

An N6-(pyridoxal phosphate)lysine modification is found at K267.

It belongs to the class-III pyridoxal-phosphate-dependent aminotransferase family. HemL subfamily. As to quaternary structure, homodimer. The cofactor is pyridoxal 5'-phosphate.

It is found in the cytoplasm. It carries out the reaction (S)-4-amino-5-oxopentanoate = 5-aminolevulinate. Its pathway is porphyrin-containing compound metabolism; protoporphyrin-IX biosynthesis; 5-aminolevulinate from L-glutamyl-tRNA(Glu): step 2/2. In Oceanobacillus iheyensis (strain DSM 14371 / CIP 107618 / JCM 11309 / KCTC 3954 / HTE831), this protein is Glutamate-1-semialdehyde 2,1-aminomutase 2.